The primary structure comprises 135 residues: Large ribosomal subunit protein uL16c (135 aa).

The protein belongs to the universal ribosomal protein uL16 family. As to quaternary structure, part of the 50S ribosomal subunit.

The protein resides in the plastid. Its subcellular location is the chloroplast. The chain is Large ribosomal subunit protein uL16c from Platanus occidentalis (Sycamore).